Reading from the N-terminus, the 167-residue chain is Ribosome maturation factor RimM (167 aa).

The PRC barrel domain maps to 93-165 (KGVYYDFQLI…QVIIDPIPGL (73 aa)).

It belongs to the RimM family. As to quaternary structure, binds ribosomal protein uS19.

The protein localises to the cytoplasm. An accessory protein needed during the final step in the assembly of 30S ribosomal subunit, possibly for assembly of the head region. Essential for efficient processing of 16S rRNA. May be needed both before and after RbfA during the maturation of 16S rRNA. It has affinity for free ribosomal 30S subunits but not for 70S ribosomes. This is Ribosome maturation factor RimM from Dehalococcoides mccartyi (strain ATCC BAA-2266 / KCTC 15142 / 195) (Dehalococcoides ethenogenes (strain 195)).